The chain runs to 111 residues: UPF0339 protein BP0521 (111 aa).

2 tandem repeats follow at residues 9–57 and 60–108. The interval 86–111 is disordered; it reads TQARDNGIASVKSNAPGAPTKDQTQA.

It belongs to the UPF0339 family. Duplicated subfamily.

This chain is UPF0339 protein BP0521, found in Bordetella pertussis (strain Tohama I / ATCC BAA-589 / NCTC 13251).